The primary structure comprises 70 residues: DNA gyrase inhibitor YacG (70 aa).

Residues C9, C12, C28, and C32 each coordinate Zn(2+). The disordered stretch occupies residues 43 to 70 (ESRKIPGSSIDPESIVTSNNKQDNVDEQ).

The protein belongs to the DNA gyrase inhibitor YacG family. As to quaternary structure, interacts with GyrB. Zn(2+) is required as a cofactor.

Its function is as follows. Inhibits all the catalytic activities of DNA gyrase by preventing its interaction with DNA. Acts by binding directly to the C-terminal domain of GyrB, which probably disrupts DNA binding by the gyrase. The polypeptide is DNA gyrase inhibitor YacG (Legionella pneumophila (strain Lens)).